A 1661-amino-acid polypeptide reads, in one-letter code: Microtubule cross-linking factor 2 (1661 aa).

The disordered stretch occupies residues 1–187 (MEAPAAEPPV…EPSVAASSVG (187 aa)). Composition is skewed to low complexity over residues 76-94 (AVAP…VRTG) and 133-149 (LLGL…SAAG). Over residues 167-176 (QQPPRPPASP) the composition is skewed to pro residues. The tract at residues 211–240 (PSGLVRELEELRSENDYLKDEIEELRAEML) is required for association with Golgi apparatus membrane. 2 coiled-coil regions span residues 218–281 (LEEL…AERR) and 310–351 (SMRL…LQTE). The interval 353 to 373 (ERPREHSLKKRGTRSLGKADK) is disordered. 3 coiled-coil regions span residues 450–484 (LKLV…MKDH), 820–865 (IKEL…LKED), and 1083–1117 (SQEK…LQKA). Phosphoserine is present on Ser1169. Positions 1196 to 1221 (AFGFVSSEPGDPEKDTKEKPGLSSRD) are disordered. The span at 1206-1215 (DPEKDTKEKP) shows a compositional bias: basic and acidic residues. A Phosphoserine modification is found at Ser1255. Disordered regions lie at residues 1432–1456 (RPCC…DSSK), 1538–1563 (RAPS…ASYH), and 1636–1661 (HSPS…PPSE). Residues 1652 to 1661 (GEERALPPSE) show a composition bias toward basic and acidic residues.

It belongs to the MTCL family. In terms of assembly, interacts with CLASP1 and CLASP2. The C-terminal 25 kDa form occurs as a monomer. In terms of processing, proteolytically cleaved in primary hepatocytes into a C-terminal 80 kDa form. Proteolytically cleaved into a C-terminal SOGA 25 kDa form that is detected in plasma. Post-translationally, phosphorylated during mitosis in a CDK1-dependent manner.

Its subcellular location is the cytoplasm. It is found in the cytoskeleton. The protein localises to the golgi apparatus membrane. The protein resides in the midbody. It localises to the secreted. In terms of biological role, microtubule-associated factor that enables integration of the centrosomal and Golgi-associated microtubules on the Golgi membrane, supporting directional migration. Preferentially acts on the perinuclear microtubules accumulated around the Golgi. Associates with the Golgi membrane through the N-terminal coiled-coil region and directly binds microtubules through the C-terminal domain. Required for faithful chromosome segregation during mitosis. Regulates autophagy by playing a role in the reduction of glucose production in an adiponectin- and insulin-dependent manner. This is Microtubule cross-linking factor 2 from Homo sapiens (Human).